Reading from the N-terminus, the 147-residue chain is Hemoglobin subunit beta (147 aa).

Valine 2 carries the post-translational modification N-acetylvaline. A Globin domain is found at 3–147 (HLADDEKAAV…VSTALAHKYH (145 aa)). Serine 45 is modified (phosphoserine). The residue at position 60 (lysine 60) is an N6-acetyllysine. Histidine 64 is a binding site for heme b. Residue lysine 83 is modified to N6-acetyllysine. Histidine 93 contacts heme b. Cysteine 94 carries the S-nitrosocysteine modification. Position 145 is an N6-acetyllysine (lysine 145).

This sequence belongs to the globin family. In terms of assembly, heterotetramer of two alpha chains and two beta chains. Red blood cells.

Functionally, involved in oxygen transport from the lung to the various peripheral tissues. This Bradypus tridactylus (Pale-throated three-toed sloth) protein is Hemoglobin subunit beta (HBB).